Consider the following 288-residue polypeptide: Probable branched-chain-amino-acid aminotransferase (288 aa).

K153 bears the N6-(pyridoxal phosphate)lysine mark.

The protein belongs to the class-IV pyridoxal-phosphate-dependent aminotransferase family. Pyridoxal 5'-phosphate is required as a cofactor.

The enzyme catalyses L-leucine + 2-oxoglutarate = 4-methyl-2-oxopentanoate + L-glutamate. The catalysed reaction is L-isoleucine + 2-oxoglutarate = (S)-3-methyl-2-oxopentanoate + L-glutamate. It carries out the reaction L-valine + 2-oxoglutarate = 3-methyl-2-oxobutanoate + L-glutamate. It functions in the pathway amino-acid biosynthesis; L-isoleucine biosynthesis; L-isoleucine from 2-oxobutanoate: step 4/4. The protein operates within amino-acid biosynthesis; L-leucine biosynthesis; L-leucine from 3-methyl-2-oxobutanoate: step 4/4. Its pathway is amino-acid biosynthesis; L-valine biosynthesis; L-valine from pyruvate: step 4/4. Acts on leucine, isoleucine and valine. In Rickettsia typhi (strain ATCC VR-144 / Wilmington), this protein is Probable branched-chain-amino-acid aminotransferase (ilvE).